The primary structure comprises 583 residues: Ankyrin repeat and SOCS box protein 15 (583 aa).

ANK repeat units follow at residues 75-104 (KGWFPLHEAVVQPIQQILETVLDASYKTLW), 110-139 (DGETPLTLAVKAGLVENVKTLLDKGVWPNT), 143-172 (KGETPLLIAIKRGSYDMVSALIKYNTSLDQ), 176-205 (KRWSAMHEAAKQGRKDIITLLLNHRGNVHL), 209-238 (FGVTPLGVAAEYGHCDVLEHLIHKGGDVFA), 242-271 (DGASVLFEAAGGGNPDCISLLLKYGGSGNV), 275-304 (AGHLPIHRAAYEGHYLALKYLIPVTSKHAI), 307-336 (SGLTPIHSAAEGQNAQCLELLIENGFDVNA), 349-378 (ERKTALYFAVSNNDIHCTEVLLAAGADPNL), 379-408 (DPLNCLLVAVRANRHEIVRLLLSYGANVNC), and 416-444 (TRFPSAIQYALNDEIMLRLLLNNGYQVEL). The 56-residue stretch at 524-579 (WPEIRQIIENPCSLKHLCRLKIRRVMGLQRLCQPASIQMLPLPAAMRRYLLFKEFD) folds into the SOCS box domain.

Belongs to the ankyrin SOCS box (ASB) family.

It functions in the pathway protein modification; protein ubiquitination. Its function is as follows. May be a substrate-recognition component of a SCF-like ECS (Elongin-Cullin-SOCS-box protein) E3 ubiquitin-protein ligase complex which mediates the ubiquitination and subsequent proteasomal degradation of target proteins. The polypeptide is Ankyrin repeat and SOCS box protein 15 (Asb15) (Mus musculus (Mouse)).